We begin with the raw amino-acid sequence, 183 residues long: UPF0200 protein MMP1282 (183 aa).

ATP is bound at residue 8 to 15 (GMPGSGKS).

The protein belongs to the UPF0200 family.

This Methanococcus maripaludis (strain DSM 14266 / JCM 13030 / NBRC 101832 / S2 / LL) protein is UPF0200 protein MMP1282.